The following is a 490-amino-acid chain: Bifunctional protein HldE (490 aa).

The tract at residues 1-328 (MFSFDALLQA…LRRRILPHAS (328 aa)) is ribokinase. 205-208 (NRKE) lines the ATP pocket. Asp275 is an active-site residue. The tract at residues 358–490 (FTNGCFDILH…LVARAREGQS (133 aa)) is cytidylyltransferase.

It in the N-terminal section; belongs to the carbohydrate kinase PfkB family. This sequence in the C-terminal section; belongs to the cytidylyltransferase family. Homodimer.

It catalyses the reaction D-glycero-beta-D-manno-heptose 7-phosphate + ATP = D-glycero-beta-D-manno-heptose 1,7-bisphosphate + ADP + H(+). The enzyme catalyses D-glycero-beta-D-manno-heptose 1-phosphate + ATP + H(+) = ADP-D-glycero-beta-D-manno-heptose + diphosphate. Its pathway is nucleotide-sugar biosynthesis; ADP-L-glycero-beta-D-manno-heptose biosynthesis; ADP-L-glycero-beta-D-manno-heptose from D-glycero-beta-D-manno-heptose 7-phosphate: step 1/4. It participates in nucleotide-sugar biosynthesis; ADP-L-glycero-beta-D-manno-heptose biosynthesis; ADP-L-glycero-beta-D-manno-heptose from D-glycero-beta-D-manno-heptose 7-phosphate: step 3/4. Its function is as follows. Catalyzes the phosphorylation of D-glycero-D-manno-heptose 7-phosphate at the C-1 position to selectively form D-glycero-beta-D-manno-heptose-1,7-bisphosphate. Catalyzes the ADP transfer from ATP to D-glycero-beta-D-manno-heptose 1-phosphate, yielding ADP-D-glycero-beta-D-manno-heptose. The sequence is that of Bifunctional protein HldE from Rhodopseudomonas palustris (strain TIE-1).